Reading from the N-terminus, the 624-residue chain is Poly(A)-specific ribonuclease PARN (624 aa).

Positions 28 and 30 each coordinate a divalent metal cation. One can recognise an R3H domain in the interval 171-238; the sequence is KKFIDQVIEK…ERHIVISKVD (68 aa). At K213 the chain carries N6-acetyllysine. The a divalent metal cation site is built by D285 and D375. K492 bears the N6-acetyllysine mark. S523 is subject to Phosphoserine. S543 is modified (phosphoserine; by MAPKAPK2). A disordered region spans residues 551-612; sequence GKRTLSPDPR…ELSLAGSVSD (62 aa). The segment covering 567-579 has biased composition (acidic residues); that stretch reads RESEEVSDSELEQ. 3 positions are modified to phosphoserine: S569, S573, and S575. The segment covering 592-601 has biased composition (basic residues); sequence KKSKKLKRMK. Phosphoserine is present on residues S605, S609, and S613.

This sequence belongs to the CAF1 family. In terms of assembly, homodimer. Found in a mRNA decay complex with RENT1, RENT2 and RENT3B. Interacts with KHSRP. Interacts with CELF1/CUGBP1. Interacts with ZC3HAV1 in an RNA-independent manner. Interacts with DHX36. Requires Mg(2+) as cofactor. In terms of processing, phosphorylation by MAPKAPK2, preventing GADD45A mRNA degradation after genotoxic stress.

It localises to the nucleus. It is found in the cytoplasm. The protein localises to the nucleolus. It catalyses the reaction Exonucleolytic cleavage of poly(A) to 5'-AMP.. In terms of biological role, 3'-exoribonuclease that has a preference for poly(A) tails of mRNAs, thereby efficiently degrading poly(A) tails. Exonucleolytic degradation of the poly(A) tail is often the first step in the decay of eukaryotic mRNAs and is also used to silence certain maternal mRNAs translationally during oocyte maturation and early embryonic development. Interacts with both the 3'-end poly(A) tail and the 5'-end cap structure during degradation, the interaction with the cap structure being required for an efficient degradation of poly(A) tails. Involved in nonsense-mediated mRNA decay, a critical process of selective degradation of mRNAs that contain premature stop codons. Also involved in degradation of inherently unstable mRNAs that contain AU-rich elements (AREs) in their 3'-UTR, possibly via its interaction with KHSRP. Probably mediates the removal of poly(A) tails of AREs mRNAs, which constitutes the first step of destabilization. Also able to recognize poly(A) tails of microRNAs such as MIR21 and H/ACA box snoRNAs (small nucleolar RNAs) leading to leading to microRNAs degradation or snoRNA increased stability. This is Poly(A)-specific ribonuclease PARN (Parn) from Mus musculus (Mouse).